An 82-amino-acid chain; its full sequence is Small ribosomal subunit protein bS16 (82 aa).

It belongs to the bacterial ribosomal protein bS16 family.

The sequence is that of Small ribosomal subunit protein bS16 from Yersinia pseudotuberculosis serotype O:1b (strain IP 31758).